A 336-amino-acid chain; its full sequence is Probable tRNA N6-adenosine threonylcarbamoyltransferase (336 aa).

Positions 110, 114, and 131 each coordinate a divalent metal cation. Substrate-binding positions include 131–135 (YVSGG), aspartate 163, glycine 178, glutamate 182, and asparagine 267. Aspartate 295 lines the a divalent metal cation pocket.

This sequence belongs to the KAE1 / TsaD family. In terms of assembly, component of the EKC/KEOPS complex; the whole complex dimerizes. A divalent metal cation serves as cofactor.

It is found in the cytoplasm. Its subcellular location is the nucleus. It catalyses the reaction L-threonylcarbamoyladenylate + adenosine(37) in tRNA = N(6)-L-threonylcarbamoyladenosine(37) in tRNA + AMP + H(+). In terms of biological role, component of the EKC/KEOPS complex that is required for the formation of a threonylcarbamoyl group on adenosine at position 37 (t(6)A37) in tRNAs that read codons beginning with adenine. The complex is probably involved in the transfer of the threonylcarbamoyl moiety of threonylcarbamoyl-AMP (TC-AMP) to the N6 group of A37. Osgep likely plays a direct catalytic role in this reaction, but requires other protein(s) of the complex to fulfill this activity. The chain is Probable tRNA N6-adenosine threonylcarbamoyltransferase from Dictyostelium discoideum (Social amoeba).